We begin with the raw amino-acid sequence, 271 residues long: GPN-loop GTPase 3 (271 aa).

GTP is bound at residue 13 to 18 (GAGKST). The short motif at 70–72 (GPN) is the Gly-Pro-Asn (GPN)-loop; involved in dimer interface element. 173-176 (SKLD) lines the GTP pocket.

It belongs to the GPN-loop GTPase family. As to quaternary structure, heterodimers with GPN1 or GPN2. Binds to RNA polymerase II (RNAPII).

Small GTPase required for proper nuclear import of RNA polymerase II and III (RNAPII and RNAPIII). May act at an RNAP assembly step prior to nuclear import. In Candida glabrata (strain ATCC 2001 / BCRC 20586 / JCM 3761 / NBRC 0622 / NRRL Y-65 / CBS 138) (Yeast), this protein is GPN-loop GTPase 3.